We begin with the raw amino-acid sequence, 307 residues long: Ribonuclease Z (307 aa).

Residues H63, H65, D67, H68, H141, D212, and H270 each coordinate Zn(2+). The active-site Proton acceptor is D67.

This sequence belongs to the RNase Z family. Homodimer. Zn(2+) is required as a cofactor.

The enzyme catalyses Endonucleolytic cleavage of RNA, removing extra 3' nucleotides from tRNA precursor, generating 3' termini of tRNAs. A 3'-hydroxy group is left at the tRNA terminus and a 5'-phosphoryl group is left at the trailer molecule.. Its function is as follows. Zinc phosphodiesterase, which displays some tRNA 3'-processing endonuclease activity. Probably involved in tRNA maturation, by removing a 3'-trailer from precursor tRNA. This Bacillus cereus (strain ATCC 14579 / DSM 31 / CCUG 7414 / JCM 2152 / NBRC 15305 / NCIMB 9373 / NCTC 2599 / NRRL B-3711) protein is Ribonuclease Z.